The chain runs to 833 residues: Bifunctional dethiobiotin synthetase/7,8-diamino-pelargonic acid aminotransferase, mitochondrial (833 aa).

The transit peptide at 1-23 (MIPVTATLIRHRLRHLRHRIRFK) directs the protein to the mitochondrion. Residues 36-299 (HPTYLIWSAN…VLVLPPVPKD (264 aa)) form a dethiobiotin synthetase region. Residue 47-52 (SLGKTL) participates in ATP binding. Residue threonine 51 coordinates Mg(2+). Threonine 81 contributes to the substrate binding site. Aspartate 88 is a binding site for Mg(2+). Residues aspartate 97, 210-213 (ETAG), and 270-271 (ED) contribute to the ATP site. Glutamate 210 contacts Mg(2+). The interval 332–830 (RLNGMAKLAG…TKLYKRLGEF (499 aa)) is 7,8-diamino-pelargonic acid aminotransferase. 391 to 392 (WW) contributes to the (8S)-8-amino-7-oxononanoate binding site. Position 453–454 (453–454 (GS)) interacts with pyridoxal 5'-phosphate. Tyrosine 495 is a binding site for (8S)-8-amino-7-oxononanoate. ATP is bound by residues 518 to 520 (PWY) and glutamate 545. Aspartate 637 lines the pyridoxal 5'-phosphate pocket. 2 residues coordinate (8S)-8-amino-7-oxononanoate: lysine 666 and glycine 700. Lysine 666 bears the N6-(pyridoxal phosphate)lysine mark. Residue 701–702 (HS) coordinates pyridoxal 5'-phosphate. Arginine 797 contacts (8S)-8-amino-7-oxononanoate.

It in the N-terminal section; belongs to the dethiobiotin synthetase family. In the C-terminal section; belongs to the class-III pyridoxal-phosphate-dependent aminotransferase family. BioA subfamily. Homodimer. Mg(2+) serves as cofactor. It depends on pyridoxal 5'-phosphate as a cofactor.

The protein resides in the mitochondrion matrix. The enzyme catalyses (7R,8S)-7,8-diammoniononanoate + CO2 + ATP = (4R,5S)-dethiobiotin + ADP + phosphate + 3 H(+). It catalyses the reaction (8S)-8-amino-7-oxononanoate + S-adenosyl-L-methionine = S-adenosyl-4-methylsulfanyl-2-oxobutanoate + (7R,8S)-7,8-diammoniononanoate. The protein operates within cofactor biosynthesis; biotin biosynthesis; biotin from 7,8-diaminononanoate: step 1/2. It participates in cofactor biosynthesis; biotin biosynthesis; 7,8-diaminononanoate from 8-amino-7-oxononanoate (SAM route): step 1/1. Bifunctional enzyme that catalyzes two different reactions involved in the biotin biosynthesis. Functionally, catalyzes a mechanistically unusual reaction, the ATP-dependent insertion of CO2 between the N7 and N8 nitrogen atoms of 7,8-diaminopelargonic acid (DAPA) to form an ureido ring. Its function is as follows. Catalyzes the transfer of the alpha-amino group from S-adenosyl-L-methionine (SAM) to 7-keto-8-aminopelargonic acid (KAPA) to form 7,8-diaminopelargonic acid (DAPA). It is the only aminotransferase known to utilize SAM as an amino donor. This chain is Bifunctional dethiobiotin synthetase/7,8-diamino-pelargonic acid aminotransferase, mitochondrial, found in Arabidopsis thaliana (Mouse-ear cress).